A 4244-amino-acid chain; its full sequence is Tenascin-X (4244 aa).

An N-terminal signal peptide occupies residues 1-23; the sequence is MMPAQYALTSSLVLLVLLSTARA. The tract at residues 27 to 57 is disordered; the sequence is SSRSNVTLPAPRPPPQPGGHTVGAGVGSPSS. N-linked (GlcNAc...) asparagine glycosylation occurs at Asn31. The region spanning 156-168 is the EGF-like 1; incomplete domain; that stretch reads CSCEPGWGGPTCS. The tract at residues 169-189 is disordered; sequence DPTDAEIPPSSPPSASGSCPD. 18 consecutive EGF-like domains span residues 183–213, 214–244, 245–275, 276–306, 307–337, 338–368, 369–399, 400–430, 431–461, 462–492, 493–523, 524–554, 555–585, 586–616, 617–647, 648–679, 684–714, and 715–746; these read ASGS…GPSC, GWPS…GPDC, SQRS…GDDC, GMRS…GEDC, GVRS…GEDC, GTRS…GEDC, STRT…GDDC, GVRS…GTDC, GSRA…GEDC, GVRS…GRDC, GTRA…GEDC, GSRR…GEDC, STRS…GEDC, GVRQ…SEDC, SIRT…GPTC, ATRM…EDCG, PASA…GPDC, and AIQT…EDCG. Intrachain disulfides connect Cys187–Cys197, Cys191–Cys202, Cys204–Cys213, Cys218–Cys228, Cys222–Cys233, Cys235–Cys244, Cys249–Cys259, Cys253–Cys264, Cys266–Cys275, Cys280–Cys290, Cys284–Cys295, Cys297–Cys306, Cys311–Cys321, Cys315–Cys326, Cys328–Cys337, Cys342–Cys352, Cys346–Cys357, Cys359–Cys368, Cys373–Cys383, Cys377–Cys388, Cys390–Cys399, Cys404–Cys414, Cys408–Cys419, Cys421–Cys430, Cys435–Cys445, Cys439–Cys450, Cys452–Cys461, Cys466–Cys476, Cys470–Cys481, Cys483–Cys492, Cys497–Cys507, Cys501–Cys512, Cys514–Cys523, Cys528–Cys538, Cys532–Cys543, Cys545–Cys554, Cys559–Cys569, Cys563–Cys574, Cys576–Cys585, Cys590–Cys600, Cys594–Cys605, Cys607–Cys616, Cys621–Cys631, Cys625–Cys636, Cys638–Cys647, Cys652–Cys662, Cys656–Cys667, Cys669–Cys678, Cys688–Cys698, Cys692–Cys703, Cys705–Cys714, Cys719–Cys729, Cys723–Cys734, and Cys736–Cys745. The disordered stretch occupies residues 926–956; the sequence is TGSSPLGLLGTTDEPPPSGPSTTQGAQAPLL. Fibronectin type-III domains are found at residues 959 to 1051, 1064 to 1153, 1161 to 1249, 1263 to 1352, 1374 to 1468, 1476 to 1572, 1574 to 1669, 1674 to 1764, 1778 to 1868, and 1883 to 1971; these read RPQE…IMDK, RLGE…PQSD, HLGN…APER, LLGE…PQED, LLGE…TPPA, RLGE…TEAS, PPLE…RGDA, PPRL…ARSA, LGEE…REET, and HLGE…VPEE. The segment at 1340 to 1372 is disordered; that stretch reads PESVVAKTAPQEDVDETPSPTELGTEAPESPEE. Positions 1666–1668 match the Cell attachment site motif; the sequence is RGD. The interval 1752–1777 is disordered; it reads PLTADGTTEARSAMDDTGTKRPPKPR. The interval 1968-1990 is disordered; that stretch reads VPEEEKPSEPPTATPEPPIKPRL. Residues 1976 to 1987 show a composition bias toward pro residues; it reads EPPTATPEPPIK. Fibronectin type-III domains follow at residues 1989–2089, 2097–2185, 2196–2296, 2305–2398, and 2408–2502; these read RLGE…SMEA, LLGE…APEE, RLGQ…TEPP, RLEE…TPSP, and PPEE…PQED. Positions 2281–2304 are disordered; that stretch reads APGKDEEMAPASTEPPTPEPPIKP. The tract at residues 2495-2542 is disordered; that stretch reads GVTAPQEDVDETPSPTEPGTEAPGPPEEPLLGELTVTGSSPDSLSLSW. Residues 2506 to 2516 show a composition bias toward low complexity; sequence TPSPTEPGTEA. Fibronectin type-III domains are found at residues 2519 to 2617, 2625 to 2723, 2733 to 2840, 2841 to 2939, 2949 to 3042, 3062 to 3153, 3168 to 3260, 3264 to 3355, 3357 to 3446, 3451 to 3544, 3553 to 3647, 3657 to 3754, 3758 to 3847, 3848 to 3934, and 3935 to 4025; these read PPEE…TTQA, PPIK…TPSP, PPEE…TTPE, PPNK…TPAP, PPEE…APKD, RLGE…TPSP, LLGE…TPLP, RLGE…TKPS, RLGE…PLEK, HLGE…TPAP, PPEE…LAPA, RLSQ…TLSP, SPRD…VPDG, PTQL…TGLE, and APRD…LRIP. Polar residues predominate over residues 2530–2542; that stretch reads VTGSSPDSLSLSW. 2 disordered regions span residues 2824 to 2847 and 2933 to 2969; these read PEDE…KPRL and EEET…DSLS. Positions 2937 to 2946 are enriched in low complexity; the sequence is PAPTEPSTEA. The segment covering 2960–2969 has biased composition (polar residues); the sequence is VTGSSPDSLS. Disordered stretches follow at residues 3536–3559 and 3636–3662; these read APEE…EPRL and LSAE…SQLS. Residues Asn3855, Asn3908, and Asn3920 are each glycosylated (N-linked (GlcNAc...) asparagine). Residues 4021–4236 enclose the Fibrinogen C-terminal domain; that stretch reads GLRIPFPRDC…FTEMKLRPRN (216 aa). Cys4030 and Cys4060 form a disulfide bridge. Residue Asn4095 is glycosylated (N-linked (GlcNAc...) asparagine). A disulfide bond links Cys4182 and Cys4195.

Belongs to the tenascin family. Homotrimer. Interacts with type I, III and V collagens and tropoelastin via its 29th fibronectin type-III domain. As to expression, highly expressed in fetal adrenal, in fetal testis, fetal smooth, striated and cardiac muscle. Isoform XB-short is only expressed in the adrenal gland.

It is found in the secreted. It localises to the extracellular space. The protein resides in the extracellular matrix. Functionally, appears to mediate interactions between cells and the extracellular matrix. Substrate-adhesion molecule that appears to inhibit cell migration. Accelerates collagen fibril formation. May play a role in supporting the growth of epithelial tumors. The chain is Tenascin-X from Homo sapiens (Human).